A 322-amino-acid polypeptide reads, in one-letter code: Cytochrome c biogenesis protein CcsA (322 aa).

6 helical membrane passes run 9–29 (ILTH…LITL), 44–64 (GMIV…ASSG), 143–163 (MLLS…ILII), 226–246 (VISL…VWAN), 259–276 (ETWA…LHSR), and 289–309 (IASI…LLGI).

Belongs to the CcmF/CycK/Ccl1/NrfE/CcsA family. As to quaternary structure, may interact with Ccs1.

It localises to the plastid. It is found in the chloroplast thylakoid membrane. Functionally, required during biogenesis of c-type cytochromes (cytochrome c6 and cytochrome f) at the step of heme attachment. In Triticum aestivum (Wheat), this protein is Cytochrome c biogenesis protein CcsA.